The chain runs to 280 residues: Acetyl-coenzyme A carboxylase carboxyl transferase subunit beta (280 aa).

In terms of domain architecture, CoA carboxyltransferase N-terminal spans isoleucine 28–glutamine 280. Cysteine 32, cysteine 35, cysteine 51, and cysteine 54 together coordinate Zn(2+). A C4-type zinc finger spans residues cysteine 32–cysteine 54.

This sequence belongs to the AccD/PCCB family. As to quaternary structure, acetyl-CoA carboxylase is a heterohexamer composed of biotin carboxyl carrier protein (AccB), biotin carboxylase (AccC) and two subunits each of ACCase subunit alpha (AccA) and ACCase subunit beta (AccD). Zn(2+) serves as cofactor.

It localises to the cytoplasm. It carries out the reaction N(6)-carboxybiotinyl-L-lysyl-[protein] + acetyl-CoA = N(6)-biotinyl-L-lysyl-[protein] + malonyl-CoA. It participates in lipid metabolism; malonyl-CoA biosynthesis; malonyl-CoA from acetyl-CoA: step 1/1. In terms of biological role, component of the acetyl coenzyme A carboxylase (ACC) complex. Biotin carboxylase (BC) catalyzes the carboxylation of biotin on its carrier protein (BCCP) and then the CO(2) group is transferred by the transcarboxylase to acetyl-CoA to form malonyl-CoA. The sequence is that of Acetyl-coenzyme A carboxylase carboxyl transferase subunit beta from Shouchella clausii (strain KSM-K16) (Alkalihalobacillus clausii).